A 697-amino-acid chain; its full sequence is Glycine--tRNA ligase beta subunit (697 aa).

Belongs to the class-II aminoacyl-tRNA synthetase family. Tetramer of two alpha and two beta subunits.

The protein localises to the cytoplasm. It carries out the reaction tRNA(Gly) + glycine + ATP = glycyl-tRNA(Gly) + AMP + diphosphate. The chain is Glycine--tRNA ligase beta subunit from Cereibacter sphaeroides (strain ATCC 17029 / ATH 2.4.9) (Rhodobacter sphaeroides).